Here is a 189-residue protein sequence, read N- to C-terminus: HGPRTase-like protein (189 aa).

This sequence belongs to the purine/pyrimidine phosphoribosyltransferase family. Archaeal HPRT subfamily.

Its function is as follows. May catalyze a purine salvage reaction, the substrate is unknown. This Halomicrobium mukohataei (strain ATCC 700874 / DSM 12286 / JCM 9738 / NCIMB 13541) (Haloarcula mukohataei) protein is HGPRTase-like protein.